Here is a 103-residue protein sequence, read N- to C-terminus: MYAVIKTGGKQYKVAAGEKIKVEQIAADVGQEIVIDQVLAVGEGSSIKVGTPLVSGATVTVTVLSHGRHDKVRIFKMRRRKHYQKRQGHRQNFTELQIGAIVG.

The protein belongs to the bacterial ribosomal protein bL21 family. In terms of assembly, part of the 50S ribosomal subunit. Contacts protein L20.

Functionally, this protein binds to 23S rRNA in the presence of protein L20. In Polaromonas naphthalenivorans (strain CJ2), this protein is Large ribosomal subunit protein bL21.